A 258-amino-acid polypeptide reads, in one-letter code: 5'-nucleotidase SurE (258 aa).

Residues Asp-9, Asp-10, Ser-40, and Asn-95 each coordinate a divalent metal cation.

Belongs to the SurE nucleotidase family. It depends on a divalent metal cation as a cofactor.

It localises to the cytoplasm. The catalysed reaction is a ribonucleoside 5'-phosphate + H2O = a ribonucleoside + phosphate. Functionally, nucleotidase that shows phosphatase activity on nucleoside 5'-monophosphates. This Nitratiruptor sp. (strain SB155-2) protein is 5'-nucleotidase SurE.